The following is a 396-amino-acid chain: Chalcone synthase B (396 aa).

Cys170 is an active-site residue.

The protein belongs to the thiolase-like superfamily. Chalcone/stilbene synthases family.

The catalysed reaction is (E)-4-coumaroyl-CoA + 3 malonyl-CoA + 3 H(+) = 2',4,4',6'-tetrahydroxychalcone + 3 CO2 + 4 CoA. The protein operates within secondary metabolite biosynthesis; flavonoid biosynthesis. In terms of biological role, the primary product of this enzyme is 4,2',4',6'-tetrahydroxychalcone (also termed naringenin-chalcone or chalcone) which can under specific conditions spontaneously isomerize into naringenin. In Ipomoea purpurea (Common morning glory), this protein is Chalcone synthase B (CHSB).